A 372-amino-acid chain; its full sequence is Flagellar P-ring protein (372 aa).

An N-terminal signal peptide occupies residues 1-26 (MNLSSLPFRLLAAAVALCAIAAPASA).

It belongs to the FlgI family. In terms of assembly, the basal body constitutes a major portion of the flagellar organelle and consists of four rings (L,P,S, and M) mounted on a central rod.

It is found in the periplasm. The protein localises to the bacterial flagellum basal body. Its function is as follows. Assembles around the rod to form the L-ring and probably protects the motor/basal body from shearing forces during rotation. The polypeptide is Flagellar P-ring protein (Xanthomonas axonopodis pv. citri (strain 306)).